A 354-amino-acid polypeptide reads, in one-letter code: Uroporphyrinogen decarboxylase (354 aa).

Substrate contacts are provided by residues 27–31 (RQAGR), phenylalanine 46, aspartate 77, tyrosine 153, threonine 208, and histidine 326.

It belongs to the uroporphyrinogen decarboxylase family. As to quaternary structure, homodimer.

Its subcellular location is the cytoplasm. It carries out the reaction uroporphyrinogen III + 4 H(+) = coproporphyrinogen III + 4 CO2. The protein operates within porphyrin-containing compound metabolism; protoporphyrin-IX biosynthesis; coproporphyrinogen-III from 5-aminolevulinate: step 4/4. In terms of biological role, catalyzes the decarboxylation of four acetate groups of uroporphyrinogen-III to yield coproporphyrinogen-III. This Neisseria meningitidis serogroup A / serotype 4A (strain DSM 15465 / Z2491) protein is Uroporphyrinogen decarboxylase.